We begin with the raw amino-acid sequence, 129 residues long: uncharacterized protein (129 aa).

This is an uncharacterized protein from Saccharomyces cerevisiae (strain ATCC 204508 / S288c) (Baker's yeast).